We begin with the raw amino-acid sequence, 418 residues long: Queuine tRNA-ribosyltransferase accessory subunit 2 (418 aa).

Zn(2+) is bound by residues cysteine 325, cysteine 327, cysteine 330, and histidine 356.

The protein belongs to the queuine tRNA-ribosyltransferase family. QTRT2 subfamily. Heterodimer of a catalytic subunit and an accessory subunit. Zn(2+) is required as a cofactor.

It is found in the cytoplasm. Non-catalytic subunit of the queuine tRNA-ribosyltransferase (TGT) that catalyzes the base-exchange of a guanine (G) residue with queuine (Q) at position 34 (anticodon wobble position) in tRNAs with GU(N) anticodons (tRNA-Asp, -Asn, -His and -Tyr), resulting in the hypermodified nucleoside queuosine (7-(((4,5-cis-dihydroxy-2-cyclopenten-1-yl)amino)methyl)-7-deazaguanosine). The sequence is that of Queuine tRNA-ribosyltransferase accessory subunit 2 from Drosophila sechellia (Fruit fly).